Reading from the N-terminus, the 697-residue chain is SPX domain-containing membrane protein At1g63010 (697 aa).

Positions 2–145 constitute an SPX domain; that stretch reads VAFGKYLQRK…GYRFADYYVK (144 aa). A run of 6 helical transmembrane segments spans residues 247 to 267, 278 to 298, 315 to 335, 337 to 356, 375 to 395, and 411 to 431; these read FNSL…TYII, LGAA…AQVF, LVFS…AYDA, SIAL…ARAV, AGFV…AGLL, and LPGW…CISF. Residues 439–459 are disordered; sequence EDGEKNNRNETTSDRVESSRV. A run of 5 helical transmembrane segments spans residues 513–533, 544–564, 576–596, 604–624, and 670–690; these read LLIY…SSVI, SVAI…ILVG, ILLT…NLFV, VISG…NLSL, and LLNA…VATC.

This sequence belongs to the major facilitator superfamily.

The protein resides in the membrane. This chain is SPX domain-containing membrane protein At1g63010, found in Arabidopsis thaliana (Mouse-ear cress).